We begin with the raw amino-acid sequence, 312 residues long: Serpentine receptor class gamma-31 (312 aa).

A run of 7 helical transmembrane segments spans residues 6–26, 38–58, 92–112, 132–152, 180–200, 218–238, and 259–279; these read LITQFIYGTISTIIYSLTVVF, FLKLYICQFFFNMWMYWNFYI, FIFCQYHLGFMSYSNLFLTSI, TYILIALIFITPILFTYPLLV, FILVWMVVTVLLSIIANIICW, LFLVSFVTFVINCGVFSIAML, and LLSPFANDLLSLSTPYVLIIF.

It belongs to the nematode receptor-like protein srg family.

It localises to the membrane. In Caenorhabditis elegans, this protein is Serpentine receptor class gamma-31 (srg-31).